The chain runs to 394 residues: Proliferation-associated protein 2G4 (394 aa).

Serine 2 bears the N-acetylserine mark. Serine 2 bears the Phosphoserine mark. The necessary for nucleolar localization stretch occupies residues 2–48; it reads SGEDEQQEQTIAEDLVVTKYKMGGDIANRVLRSLVEASSSGVSVLSL. The tract at residues 46-54 is RNA-binding; sequence LSLCEKGDA. Lysine 298 is covalently cross-linked (Glycyl lysine isopeptide (Lys-Gly) (interchain with G-Cter in SUMO2)). The segment at 301 to 394 is necessary for nucleolar localization; sequence LLQPFNVLYE…ETLEENGAGD (94 aa). At serine 335 the chain carries Phosphoserine. Residues 358 to 394 form a disordered region; sequence LQSSASRKTQKKKKKKASKTVENATSGETLEENGAGD. Serine 361 bears the Phosphoserine; by PKC/PRKCD mark. An interaction with RNA region spans residues 361 to 375; that stretch reads SASRKTQKKKKKKAS. Over residues 365-375 the composition is skewed to basic residues; the sequence is KTQKKKKKKAS. 2 positions are modified to phosphothreonine: threonine 366 and threonine 386.

This sequence belongs to the peptidase M24 family. As to quaternary structure, isoform 2 interacts with the cytoplasmic domain of non-phosphorylated ERBB3; the interaction requires PKC activity. Interacts with AR. Treatment with HRG leads to dissociation from ERBB3 and increases association with AR. Interacts with nucleolin/NCL. Component of a ribonucleoprotein complex containing at least PA2G4, NCL, TOP1, PABPC2, RPLP0, acetylated histone H1 (HIST1H1A or H1F1), histone H1 2/4, RPL4, RPL8, RPL15, RPL18, RPL18A, RPL21, RPL11, RPL12, RPL28, RPL27, RPLP2 and RPL24. Interacts with HDAC2. Interacts with RB1; the interaction is enhanced upon PA2G4 dephosphorylation. Interacts with AKT1. Isoform 1 and isoform 2 interact with RNF20. Isoform 2 interacts with HUWE1. Interacts with DNAJC21. Phosphorylated on serine and threonine residues. Phosphorylation is enhanced by HRG treatment. Basal phosphorylation is PKC-dependent and HRG-induced phosphorylation is predominantly PKC-independent. Phosphorylation at Ser-361 by PKC/PRKCD regulates its nucleolar localization. In terms of processing, isoform 2 is polyubiquitinated, leading to proteasomal degradation and phosphorylation by PKC/PRKCD enhances polyubiquitination. In terms of tissue distribution, widely expressed.

The protein resides in the cytoplasm. It localises to the nucleus. Its subcellular location is the nucleolus. Functionally, may play a role in a ERBB3-regulated signal transduction pathway. Seems be involved in growth regulation. Acts a corepressor of the androgen receptor (AR) and is regulated by the ERBB3 ligand neuregulin-1/heregulin (HRG). Inhibits transcription of some E2F1-regulated promoters, probably by recruiting histone acetylase (HAT) activity. Binds RNA. Associates with 28S, 18S and 5.8S mature rRNAs, several rRNA precursors and probably U3 small nucleolar RNA. May be involved in regulation of intermediate and late steps of rRNA processing. May be involved in ribosome assembly. Mediates cap-independent translation of specific viral IRESs (internal ribosomal entry site). Together with PTBP1 is required for the translation initiation on the foot-and-mouth disease virus (FMDV) IRES. Regulates cell proliferation, differentiation, and survival. Isoform 1 suppresses apoptosis whereas isoform 2 promotes cell differentiation. This is Proliferation-associated protein 2G4 (Pa2g4) from Mus musculus (Mouse).